The chain runs to 497 residues: Arabinose import ATP-binding protein AraG (497 aa).

ABC transporter domains follow at residues 6–242 (LRFD…MVGR) and 250–497 (FRPR…ALPA). Residue 38 to 45 (GENGAGKS) coordinates ATP.

The protein belongs to the ABC transporter superfamily. Arabinose importer (TC 3.A.1.2.2) family. In terms of assembly, the complex is composed of two ATP-binding proteins (AraG), two transmembrane proteins (AraH) and a solute-binding protein (AraF).

Its subcellular location is the cell inner membrane. The enzyme catalyses L-arabinose(out) + ATP + H2O = L-arabinose(in) + ADP + phosphate + H(+). Its function is as follows. Part of the ABC transporter complex AraFGH involved in arabinose import. Responsible for energy coupling to the transport system. This chain is Arabinose import ATP-binding protein AraG, found in Chromohalobacter salexigens (strain ATCC BAA-138 / DSM 3043 / CIP 106854 / NCIMB 13768 / 1H11).